Reading from the N-terminus, the 48-residue chain is Large ribosomal subunit protein eL40 (48 aa).

Belongs to the eukaryotic ribosomal protein eL40 family.

The polypeptide is Large ribosomal subunit protein eL40 (Methanospirillum hungatei JF-1 (strain ATCC 27890 / DSM 864 / NBRC 100397 / JF-1)).